Reading from the N-terminus, the 444-residue chain is Elongation factor 1-alpha (444 aa).

Residues 15 to 238 (KPHINLAVVG…DSFQPPQRPV (224 aa)) enclose the tr-type G domain. The tract at residues 24 to 31 (GHVDNGKS) is G1. 24–31 (GHVDNGKS) serves as a coordination point for GTP. S31 contacts Mg(2+). A G2 region spans residues 80 to 84 (GVTIE). Residues 101–104 (DLPG) are G3. GTP-binding positions include 101–105 (DLPGH) and 163–166 (NKMD). The segment at 163-166 (NKMD) is G4. Positions 202–204 (SAI) are G5.

It belongs to the TRAFAC class translation factor GTPase superfamily. Classic translation factor GTPase family. EF-Tu/EF-1A subfamily.

Its subcellular location is the cytoplasm. The enzyme catalyses GTP + H2O = GDP + phosphate + H(+). GTP hydrolase that promotes the GTP-dependent binding of aminoacyl-tRNA to the A-site of ribosomes during protein biosynthesis. This chain is Elongation factor 1-alpha, found in Pyrobaculum aerophilum (strain ATCC 51768 / DSM 7523 / JCM 9630 / CIP 104966 / NBRC 100827 / IM2).